A 172-amino-acid chain; its full sequence is Large ribosomal subunit protein uL10 (172 aa).

It belongs to the universal ribosomal protein uL10 family. In terms of assembly, part of the ribosomal stalk of the 50S ribosomal subunit. The N-terminus interacts with L11 and the large rRNA to form the base of the stalk. The C-terminus forms an elongated spine to which L12 dimers bind in a sequential fashion forming a multimeric L10(L12)X complex.

Forms part of the ribosomal stalk, playing a central role in the interaction of the ribosome with GTP-bound translation factors. The polypeptide is Large ribosomal subunit protein uL10 (Pelodictyon phaeoclathratiforme (strain DSM 5477 / BU-1)).